Consider the following 222-residue polypeptide: 2-hydroxy-3-keto-5-methylthiopentenyl-1-phosphate phosphatase (222 aa).

The protein belongs to the HAD-like hydrolase superfamily. MtnX family.

The enzyme catalyses 2-hydroxy-5-methylsulfanyl-3-oxopent-1-enyl phosphate + H2O = 1,2-dihydroxy-5-(methylsulfanyl)pent-1-en-3-one + phosphate. It participates in amino-acid biosynthesis; L-methionine biosynthesis via salvage pathway; L-methionine from S-methyl-5-thio-alpha-D-ribose 1-phosphate: step 4/6. In terms of biological role, dephosphorylates 2-hydroxy-3-keto-5-methylthiopentenyl-1-phosphate (HK-MTPenyl-1-P) yielding 1,2-dihydroxy-3-keto-5-methylthiopentene (DHK-MTPene). The chain is 2-hydroxy-3-keto-5-methylthiopentenyl-1-phosphate phosphatase from Brevibacillus brevis (strain 47 / JCM 6285 / NBRC 100599).